Here is a 219-residue protein sequence, read N- to C-terminus: 2-C-methyl-D-erythritol 4-phosphate cytidylyltransferase (219 aa).

Belongs to the IspD/TarI cytidylyltransferase family. IspD subfamily.

The enzyme catalyses 2-C-methyl-D-erythritol 4-phosphate + CTP + H(+) = 4-CDP-2-C-methyl-D-erythritol + diphosphate. Its pathway is isoprenoid biosynthesis; isopentenyl diphosphate biosynthesis via DXP pathway; isopentenyl diphosphate from 1-deoxy-D-xylulose 5-phosphate: step 2/6. Functionally, catalyzes the formation of 4-diphosphocytidyl-2-C-methyl-D-erythritol from CTP and 2-C-methyl-D-erythritol 4-phosphate (MEP). The protein is 2-C-methyl-D-erythritol 4-phosphate cytidylyltransferase of Bacteroides fragilis (strain ATCC 25285 / DSM 2151 / CCUG 4856 / JCM 11019 / LMG 10263 / NCTC 9343 / Onslow / VPI 2553 / EN-2).